We begin with the raw amino-acid sequence, 89 residues long: Large ribosomal subunit protein bL28 (89 aa).

The protein belongs to the bacterial ribosomal protein bL28 family.

The protein is Large ribosomal subunit protein bL28 of Chlamydia caviae (strain ATCC VR-813 / DSM 19441 / 03DC25 / GPIC) (Chlamydophila caviae).